We begin with the raw amino-acid sequence, 243 residues long: HTH-type transcriptional regulator MlrA (243 aa).

Residues 3–72 (LYTIGEVALL…VSKVKMLLSN (70 aa)) enclose the HTH merR-type domain. Positions 6-25 (IGEVALLCDINPVTLRAWQR) form a DNA-binding region, H-T-H motif.

As to quaternary structure, interacts with DgcM and PdeR.

With respect to regulation, activity is regulated by DgcM and PdeR. In terms of biological role, activates transcription of csgD, the master regulator of biofilm formation, by binding to its promoter region. Also controls the transcription of cadC and ibaG. Part of a signaling cascade that regulates curli biosynthesis. The cascade is composed of two c-di-GMP control modules, in which c-di-GMP controlled by the DgcE/PdeH pair (module I) regulates the activity of the DgcM/PdeR pair (module II), which in turn regulates activity of the transcription factor MlrA. In Escherichia coli (strain K12), this protein is HTH-type transcriptional regulator MlrA.